Reading from the N-terminus, the 24-residue chain is Frenatin-4 (24 aa).

Expressed by the skin glands.

It localises to the secreted. Very weak antimicrobial peptide since it does not show activity below 100 ug/ml against Bacillus cereus, Escherichia coli, Leuconostoc mesenteroides, Micrococcus luteus, Pastewella haemolytica, Staphylococcus aureus, Streptococcus faecalis and Streptococcus uberis. The chain is Frenatin-4 from Nyctimystes infrafrenatus (White-lipped tree frog).